The sequence spans 238 residues: MATLGVNIDHIANVRQARKTVEPDPVQFAFLAELGGADSITVHLREDRRHIQDRDVFLLKETIKTKLNLEMAATEEMLEIAKKTLPDYVTLVPEKREEVTTEGGLDLKSNAQYLKNFVENLKHSNIEVSAFIDPLGEQINYSKEIGFDFIELHTGKYAELSGSEQYKELQRIIESTHLANDLGLVVNAGHGLNYNNVKKIASINNMNELNIGHSIVARALAIGLEKSVREMKSLITSN.

Residue N7 participates in 3-amino-2-oxopropyl phosphate binding. D9 to H10 is a 1-deoxy-D-xylulose 5-phosphate binding site. R18 is a 3-amino-2-oxopropyl phosphate binding site. The active-site Proton acceptor is H43. 1-deoxy-D-xylulose 5-phosphate-binding residues include R45 and H50. Residue E70 is the Proton acceptor of the active site. T100 is a 1-deoxy-D-xylulose 5-phosphate binding site. H190 serves as the catalytic Proton donor. 3-amino-2-oxopropyl phosphate is bound by residues G191 and G212 to H213.

Belongs to the PNP synthase family. In terms of assembly, homooctamer; tetramer of dimers.

It localises to the cytoplasm. It carries out the reaction 3-amino-2-oxopropyl phosphate + 1-deoxy-D-xylulose 5-phosphate = pyridoxine 5'-phosphate + phosphate + 2 H2O + H(+). It participates in cofactor biosynthesis; pyridoxine 5'-phosphate biosynthesis; pyridoxine 5'-phosphate from D-erythrose 4-phosphate: step 5/5. Functionally, catalyzes the complicated ring closure reaction between the two acyclic compounds 1-deoxy-D-xylulose-5-phosphate (DXP) and 3-amino-2-oxopropyl phosphate (1-amino-acetone-3-phosphate or AAP) to form pyridoxine 5'-phosphate (PNP) and inorganic phosphate. The polypeptide is Pyridoxine 5'-phosphate synthase (Prochlorococcus marinus (strain MIT 9312)).